The following is a 194-amino-acid chain: Potassium-transporting ATPase KdpC subunit (194 aa).

A helical membrane pass occupies residues 12–34 (LFLLLLTGGVYPLLTTALGQWWF).

The protein belongs to the KdpC family. As to quaternary structure, the system is composed of three essential subunits: KdpA, KdpB and KdpC.

Its subcellular location is the cell inner membrane. Functionally, part of the high-affinity ATP-driven potassium transport (or Kdp) system, which catalyzes the hydrolysis of ATP coupled with the electrogenic transport of potassium into the cytoplasm. This subunit acts as a catalytic chaperone that increases the ATP-binding affinity of the ATP-hydrolyzing subunit KdpB by the formation of a transient KdpB/KdpC/ATP ternary complex. The protein is Potassium-transporting ATPase KdpC subunit of Salmonella choleraesuis (strain SC-B67).